A 199-amino-acid chain; its full sequence is Inner membrane protein E199L (199 aa).

N-linked (GlcNAc...) asparagine; by host glycosylation occurs at N131. The chain crosses the membrane as a helical span at residues 150–170; sequence INVMNHPFLTLILIILILVII.

Belongs to the asfivirus E199L family. As to quaternary structure, interacts with host PYCR2; this interaction results in autophagy activation. Contains intramolecular disulfide bonds.

It localises to the virion membrane. It is found in the host membrane. Functionally, essential for viral fusion with host endosomal membrane and core release. Not required for virus morphogenesis and egress. Induces complete autophagy through the interaction with and down-regulation of host PYCR2. In African swine fever virus (isolate Tick/Malawi/Lil 20-1/1983) (ASFV), this protein is Inner membrane protein E199L.